Consider the following 414-residue polypeptide: Serine hydroxymethyltransferase (414 aa).

Residues leucine 116 and 120–122 (GHL) contribute to the (6S)-5,6,7,8-tetrahydrofolate site. Lysine 224 carries the post-translational modification N6-(pyridoxal phosphate)lysine. (6S)-5,6,7,8-tetrahydrofolate is bound by residues glutamate 240 and 348-350 (SPF).

Belongs to the SHMT family. Homodimer. It depends on pyridoxal 5'-phosphate as a cofactor.

It is found in the cytoplasm. It catalyses the reaction (6R)-5,10-methylene-5,6,7,8-tetrahydrofolate + glycine + H2O = (6S)-5,6,7,8-tetrahydrofolate + L-serine. It participates in one-carbon metabolism; tetrahydrofolate interconversion. The protein operates within amino-acid biosynthesis; glycine biosynthesis; glycine from L-serine: step 1/1. Its function is as follows. Catalyzes the reversible interconversion of serine and glycine with tetrahydrofolate (THF) serving as the one-carbon carrier. This reaction serves as the major source of one-carbon groups required for the biosynthesis of purines, thymidylate, methionine, and other important biomolecules. Also exhibits THF-independent aldolase activity toward beta-hydroxyamino acids, producing glycine and aldehydes, via a retro-aldol mechanism. The sequence is that of Serine hydroxymethyltransferase from Campylobacter jejuni subsp. jejuni serotype O:2 (strain ATCC 700819 / NCTC 11168).